The primary structure comprises 904 residues: Toll-like receptor 3 (904 aa).

The N-terminal stretch at 1-23 (MRQTLPCIYFWGGLLPFGMLCAS) is a signal peptide. The LRRNT domain maps to 24-51 (STTKCTVSHEVADCSHLKLTQVPDDLPT). The Lumenal portion of the chain corresponds to 24-704 (STTKCTVSHE…SCKDSAPFEL (681 aa)). An intrachain disulfide couples C28 to C37. N-linked (GlcNAc...) asparagine glycosylation is found at N52, N57, and N70. LRR repeat units lie at residues 52–73 (NITV…NFTR), 76–97 (QLTS…LCQK), 100–121 (MLKV…TFAF), 124–145 (NLTE…PFVK), 148–168 (NLIT…GTQV), and 172–193 (NLQE…ELDI). An intrachain disulfide couples C95 to C122. N124 carries N-linked (GlcNAc...) asparagine glycosylation. N196 is a glycosylation site (N-linked (GlcNAc...) asparagine). LRR repeat units follow at residues 198–219 (SLKK…CFHA) and 222–244 (RLFG…LCLE). N-linked (GlcNAc...) asparagine glycosylation is found at N247, N252, N265, N275, and N291. LRR repeat units lie at residues 249–270 (SIRN…TFLG), 275–296 (NLTM…SFAW), 299–320 (QLEY…SLHG), 323–344 (NVRY…ASLP), 356–377 (CLEH…MFTG), 380–400 (NLKY…TNET), 408–429 (PLHI…AFSW), 432–454 (HLEV…EWRG), 465–486 (YNKY…QRLM), 507–528 (NLTI…MLEG), 531–552 (KLEI…ANPG), 563–584 (HLHI…VFKD), 587–608 (ELKI…VFNN), and 611–632 (SLKS…VFGP). N-linked (GlcNAc...) asparagine glycans are attached at residues N398 and N413. N-linked (GlcNAc...) asparagine glycosylation occurs at N507. N-linked (GlcNAc...) asparagine glycosylation is found at N636 and N662. The LRRCT domain maps to 645-698 (NPFDCTCESIAWFVNWINETHTNIPELSSHYLCNTPPHYHGFPVRLFDTSSCKD). Intrachain disulfides connect C649-C677 and C651-C696. Residues 705 to 725 (FFMINTSILLIFIFIVLLIHF) form a helical membrane-spanning segment. Residues 726 to 904 (EGWRISFYWN…VALGSKNSVH (179 aa)) lie on the Cytoplasmic side of the membrane. The TIR domain occupies 754 to 897 (FEYAAYIIHA…AFRHKLQVAL (144 aa)). Y759 carries the post-translational modification Phosphotyrosine. Residues K765, K812, and K831 each participate in a glycyl lysine isopeptide (Lys-Gly) (interchain with G-Cter in ubiquitin) cross-link. The residue at position 858 (Y858) is a Phosphotyrosine.

Belongs to the Toll-like receptor family. Monomer and homodimer; dimerization is triggered by ligand-binding, the signaling unit is composed of one ds-RNA of around 40 bp and two TLR3 molecules, and lateral clustering of signaling units along the length of the ds-RNA ligand is required for TLR3 signal transduction. Interacts (via transmembrane domain) with UNC93B1; the interaction is required for transport from the ER to the endosomes. Interacts with SRC; upon binding of double-stranded RNA. Interacts with TICAM1 (via the TIR domain) in response to poly(I:C) and this interaction is enhanced in the presence of WDFY1. The tyrosine-phosphorylated form (via TIR domain) interacts with WDFY1 (via WD repeat 2) in response to poly(I:C). Post-translationally, heavily N-glycosylated, except on that part of the surface of the ectodomain that is involved in ligand binding. TLR3 signaling requires a proteolytic cleavage mediated by cathepsins CTSB and CTSH, the cleavage occurs between amino acids 252 and 346. The cleaved form of TLR3 is the predominant form found in endosomes. In terms of processing, ubiquitinated by TRIM3; leading to recognition and sorting of polyubiquitinated TLR3 by the ESCRT complexes. Ubiquitinated by ZNRF1 via 'Lys-63'-linked ubiquitin chains; leading to TLR3 lysosomal trafficking and degradation. Ubiquitinated by RNF170 at Lys-765 via 'Lys-48'-linked ubiquitin chains; leading to TLR3 proteasomal degradation. In terms of tissue distribution, expressed at high level in placenta and pancreas. Also detected in CD11c+ immature dendritic cells. Only expressed in dendritic cells and not in other leukocytes, including monocyte precursors. TLR3 is the TLR that is expressed most strongly in the brain, especially in astrocytes, glia, and neurons.

It localises to the endoplasmic reticulum membrane. It is found in the endosome membrane. Its subcellular location is the early endosome. Functionally, key component of innate and adaptive immunity. TLRs (Toll-like receptors) control host immune response against pathogens through recognition of molecular patterns specific to microorganisms. TLR3 is a nucleotide-sensing TLR which is activated by double-stranded RNA, a sign of viral infection. Acts via the adapter TRIF/TICAM1, leading to NF-kappa-B activation, IRF3 nuclear translocation, cytokine secretion and the inflammatory response. The chain is Toll-like receptor 3 from Homo sapiens (Human).